The chain runs to 460 residues: Bifunctional protein GlmU (460 aa).

The segment at 1 to 229 (MTNYAIILAA…FNESLGVNDR (229 aa)) is pyrophosphorylase. Residues 8–11 (LAAG), lysine 22, glutamine 72, and 77–78 (GT) each bind UDP-N-acetyl-alpha-D-glucosamine. Aspartate 102 contacts Mg(2+). 4 residues coordinate UDP-N-acetyl-alpha-D-glucosamine: glycine 139, glutamate 154, asparagine 169, and asparagine 227. Asparagine 227 provides a ligand contact to Mg(2+). The segment at 230–250 (VALATAETVMRQRITQKHMVN) is linker. The interval 251–460 (GVTFQNPETV…RLAHHPSRSK (210 aa)) is N-acetyltransferase. 2 residues coordinate UDP-N-acetyl-alpha-D-glucosamine: arginine 332 and lysine 350. Histidine 362 serves as the catalytic Proton acceptor. UDP-N-acetyl-alpha-D-glucosamine contacts are provided by tyrosine 365 and asparagine 376. Residues alanine 379, 385–386 (NY), serine 404, alanine 422, and arginine 439 each bind acetyl-CoA.

The protein in the N-terminal section; belongs to the N-acetylglucosamine-1-phosphate uridyltransferase family. This sequence in the C-terminal section; belongs to the transferase hexapeptide repeat family. In terms of assembly, homotrimer. Mg(2+) serves as cofactor.

The protein localises to the cytoplasm. It catalyses the reaction alpha-D-glucosamine 1-phosphate + acetyl-CoA = N-acetyl-alpha-D-glucosamine 1-phosphate + CoA + H(+). The catalysed reaction is N-acetyl-alpha-D-glucosamine 1-phosphate + UTP + H(+) = UDP-N-acetyl-alpha-D-glucosamine + diphosphate. The protein operates within nucleotide-sugar biosynthesis; UDP-N-acetyl-alpha-D-glucosamine biosynthesis; N-acetyl-alpha-D-glucosamine 1-phosphate from alpha-D-glucosamine 6-phosphate (route II): step 2/2. Its pathway is nucleotide-sugar biosynthesis; UDP-N-acetyl-alpha-D-glucosamine biosynthesis; UDP-N-acetyl-alpha-D-glucosamine from N-acetyl-alpha-D-glucosamine 1-phosphate: step 1/1. It participates in bacterial outer membrane biogenesis; LPS lipid A biosynthesis. Functionally, catalyzes the last two sequential reactions in the de novo biosynthetic pathway for UDP-N-acetylglucosamine (UDP-GlcNAc). The C-terminal domain catalyzes the transfer of acetyl group from acetyl coenzyme A to glucosamine-1-phosphate (GlcN-1-P) to produce N-acetylglucosamine-1-phosphate (GlcNAc-1-P), which is converted into UDP-GlcNAc by the transfer of uridine 5-monophosphate (from uridine 5-triphosphate), a reaction catalyzed by the N-terminal domain. In Streptococcus pyogenes serotype M6 (strain ATCC BAA-946 / MGAS10394), this protein is Bifunctional protein GlmU.